The primary structure comprises 187 residues: Putative carbonic anhydrase YtiB (187 aa).

Residues Cys-38, Asp-40, His-96, and Cys-99 each contribute to the Zn(2+) site.

It belongs to the beta-class carbonic anhydrase family. The cofactor is Zn(2+).

The enzyme catalyses hydrogencarbonate + H(+) = CO2 + H2O. In terms of biological role, reversible hydration of carbon dioxide. The chain is Putative carbonic anhydrase YtiB (ytiB) from Bacillus subtilis (strain 168).